A 144-amino-acid chain; its full sequence is Bacilliredoxin BCE33L1972 (144 aa).

Belongs to the bacilliredoxin family.

This is Bacilliredoxin BCE33L1972 from Bacillus cereus (strain ZK / E33L).